The sequence spans 1058 residues: Carbamoyl phosphate synthase large chain (1058 aa).

The segment at 1–401 (MPKRTDIQKI…SLLKACRSLE (401 aa)) is carboxyphosphate synthetic domain. 12 residues coordinate ATP: R129, R169, G175, G176, R208, I210, E215, G241, I242, H243, Q284, and E298. The ATP-grasp 1 domain maps to 133–327 (KQLMEELEQP…IAKLAAKIAV (195 aa)). 3 residues coordinate Mg(2+): Q284, E298, and N300. 3 residues coordinate Mn(2+): Q284, E298, and N300. The interval 402–546 (IGVHHNEIPE…YSTYGWENES (145 aa)) is oligomerization domain. Residues 547 to 929 (IRSDKESVLV…ALYKAFEASY (383 aa)) form a carbamoyl phosphate synthetic domain region. An ATP-grasp 2 domain is found at 671 to 861 (EQALKELDIP…MAQVATKLIL (191 aa)). Positions 707, 746, 748, 752, 777, 778, 779, 780, 820, and 832 each coordinate ATP. 3 residues coordinate Mg(2+): Q820, E832, and N834. Mn(2+) contacts are provided by Q820, E832, and N834. The MGS-like domain occupies 930–1058 (LHLPTFGNVV…ESRSFVTEAI (129 aa)). An allosteric domain region spans residues 930–1058 (LHLPTFGNVV…ESRSFVTEAI (129 aa)).

The protein belongs to the CarB family. Composed of two chains; the small (or glutamine) chain promotes the hydrolysis of glutamine to ammonia, which is used by the large (or ammonia) chain to synthesize carbamoyl phosphate. Tetramer of heterodimers (alpha,beta)4. It depends on Mg(2+) as a cofactor. Requires Mn(2+) as cofactor.

The catalysed reaction is hydrogencarbonate + L-glutamine + 2 ATP + H2O = carbamoyl phosphate + L-glutamate + 2 ADP + phosphate + 2 H(+). The enzyme catalyses hydrogencarbonate + NH4(+) + 2 ATP = carbamoyl phosphate + 2 ADP + phosphate + 2 H(+). It functions in the pathway amino-acid biosynthesis; L-arginine biosynthesis; carbamoyl phosphate from bicarbonate: step 1/1. It participates in pyrimidine metabolism; UMP biosynthesis via de novo pathway; (S)-dihydroorotate from bicarbonate: step 1/3. Large subunit of the glutamine-dependent carbamoyl phosphate synthetase (CPSase). CPSase catalyzes the formation of carbamoyl phosphate from the ammonia moiety of glutamine, carbonate, and phosphate donated by ATP, constituting the first step of 2 biosynthetic pathways, one leading to arginine and/or urea and the other to pyrimidine nucleotides. The large subunit (synthetase) binds the substrates ammonia (free or transferred from glutamine from the small subunit), hydrogencarbonate and ATP and carries out an ATP-coupled ligase reaction, activating hydrogencarbonate by forming carboxy phosphate which reacts with ammonia to form carbamoyl phosphate. The polypeptide is Carbamoyl phosphate synthase large chain (Streptococcus pneumoniae (strain JJA)).